A 597-amino-acid polypeptide reads, in one-letter code: Proteasome-associated ATPase (597 aa).

A compositionally biased stretch (basic and acidic residues) spans 1-12 (MQHDRPGSRPEE). The segment at 1 to 22 (MQHDRPGSRPEEGGEQQIGGDA) is disordered. A coiled-coil region spans residues 21–97 (DAELNSQIRL…REEVDRLAQP (77 aa)). 284-289 (GCGKTL) is a binding site for ATP. The interval 596–597 (YL) is docks into pockets in the proteasome alpha-ring.

The protein belongs to the AAA ATPase family. As to quaternary structure, homohexamer. Assembles into a hexameric ring structure that caps the 20S proteasome core. Strongly interacts with the prokaryotic ubiquitin-like protein Pup through a hydrophobic interface; the interacting region of ARC lies in its N-terminal coiled-coil domain. There is one Pup binding site per ARC hexamer ring. Upon ATP-binding, the C-terminus of ARC interacts with the alpha-rings of the proteasome core, possibly by binding to the intersubunit pockets.

The protein operates within protein degradation; proteasomal Pup-dependent pathway. Functionally, ATPase which is responsible for recognizing, binding, unfolding and translocation of pupylated proteins into the bacterial 20S proteasome core particle. May be essential for opening the gate of the 20S proteasome via an interaction with its C-terminus, thereby allowing substrate entry and access to the site of proteolysis. Thus, the C-termini of the proteasomal ATPase may function like a 'key in a lock' to induce gate opening and therefore regulate proteolysis. This chain is Proteasome-associated ATPase, found in Saccharopolyspora erythraea (strain ATCC 11635 / DSM 40517 / JCM 4748 / NBRC 13426 / NCIMB 8594 / NRRL 2338).